Here is a 276-residue protein sequence, read N- to C-terminus: tRNA dimethylallyltransferase (276 aa).

Residues aspartate 9–serine 12 are interaction with substrate tRNA.

This sequence belongs to the IPP transferase family. Monomer. The cofactor is Mg(2+).

It carries out the reaction adenosine(37) in tRNA + dimethylallyl diphosphate = N(6)-dimethylallyladenosine(37) in tRNA + diphosphate. Catalyzes the transfer of a dimethylallyl group onto the adenine at position 37 in tRNAs that read codons beginning with uridine, leading to the formation of N6-(dimethylallyl)adenosine (i(6)A). The chain is tRNA dimethylallyltransferase (miaA) from Helicobacter pylori (strain G27).